The primary structure comprises 117 residues: Large ribosomal subunit protein uL18 (117 aa).

It belongs to the universal ribosomal protein uL18 family. Part of the 50S ribosomal subunit; part of the 5S rRNA/L5/L18/L25 subcomplex. Contacts the 5S and 23S rRNAs.

Its function is as follows. This is one of the proteins that bind and probably mediate the attachment of the 5S RNA into the large ribosomal subunit, where it forms part of the central protuberance. This chain is Large ribosomal subunit protein uL18, found in Vibrio proteolyticus (Aeromonas proteolytica).